Here is a 125-residue protein sequence, read N- to C-terminus: Immunoglobulin heavy variable 4-39 (125 aa).

The first 26 residues, 1-26 (MDLMCKKMKHLWFFLLLVAAPRWVLS), serve as a signal peptide directing secretion. A framework-1 region spans residues 27 to 51 (QLQLQESGPGLVKPSETLSLTCTVS). Positions 27-125 (QLQLQESGPG…ADTAVYYCAR (99 aa)) constitute an Ig-like domain. C48 and C123 are joined by a disulfide. The segment at 52-61 (GGSISSSSYY) is complementarity-determining-1. The framework-2 stretch occupies residues 62–78 (WGWIRQPPGKGLEWIGS). The complementarity-determining-2 stretch occupies residues 79–85 (IYYSGST). Residues 86–123 (YYNPSLKSRVTISVDTSKNQFSLKLSSVTAADTAVYYC) form a framework-3 region. The segment at 124 to 125 (AR) is complementarity-determining-3.

As to quaternary structure, immunoglobulins are composed of two identical heavy chains and two identical light chains; disulfide-linked.

The protein localises to the secreted. The protein resides in the cell membrane. Its function is as follows. V region of the variable domain of immunoglobulin heavy chains that participates in the antigen recognition. Immunoglobulins, also known as antibodies, are membrane-bound or secreted glycoproteins produced by B lymphocytes. In the recognition phase of humoral immunity, the membrane-bound immunoglobulins serve as receptors which, upon binding of a specific antigen, trigger the clonal expansion and differentiation of B lymphocytes into immunoglobulins-secreting plasma cells. Secreted immunoglobulins mediate the effector phase of humoral immunity, which results in the elimination of bound antigens. The antigen binding site is formed by the variable domain of one heavy chain, together with that of its associated light chain. Thus, each immunoglobulin has two antigen binding sites with remarkable affinity for a particular antigen. The variable domains are assembled by a process called V-(D)-J rearrangement and can then be subjected to somatic hypermutations which, after exposure to antigen and selection, allow affinity maturation for a particular antigen. The sequence is that of Immunoglobulin heavy variable 4-39 from Homo sapiens (Human).